The sequence spans 1031 residues: Error-prone DNA polymerase (1031 aa).

Belongs to the DNA polymerase type-C family. DnaE2 subfamily.

It is found in the cytoplasm. The enzyme catalyses DNA(n) + a 2'-deoxyribonucleoside 5'-triphosphate = DNA(n+1) + diphosphate. Its function is as follows. DNA polymerase involved in damage-induced mutagenesis and translesion synthesis (TLS). It is not the major replicative DNA polymerase. This chain is Error-prone DNA polymerase, found in Pseudomonas syringae pv. tomato (strain ATCC BAA-871 / DC3000).